We begin with the raw amino-acid sequence, 294 residues long: Cyclin-G1 (294 aa).

This sequence belongs to the cyclin family. Cyclin G subfamily.

The protein resides in the nucleus. In terms of biological role, may play a role in growth regulation. Is associated with G2/M phase arrest in response to DNA damage. May be an intermediate by which p53 mediates its role as an inhibitor of cellular proliferation. This chain is Cyclin-G1 (Ccng1), found in Rattus norvegicus (Rat).